Consider the following 813-residue polypeptide: Homeobox-leucine zipper protein ROC4 (813 aa).

A disordered region spans residues 62-112; sequence EVENEMSRSGSDHLDVVSCGDAGGGGGDDDDDEDAEHGNPPKRKKRYHRHT. Basic residues predominate over residues 101–112; the sequence is PPKRKKRYHRHT. Residues 104-163 constitute a DNA-binding region (homeobox); the sequence is RKKRYHRHTPQQIQELEAMFKECPHPDEKQRAELSKRLGLEPRQVKFWFQNRRTQMKMQL. A coiled-coil region spans residues 152–191; sequence FQNRRTQMKMQLERHENSLLKQENDKLRSENLSIREATSN. The START domain maps to 306 to 559; the sequence is AGIDKSLFLE…LQRQCECLAL (254 aa).

The protein belongs to the HD-ZIP homeobox family. Class IV subfamily.

It is found in the nucleus. Probable transcription factor. In Oryza sativa subsp. japonica (Rice), this protein is Homeobox-leucine zipper protein ROC4 (ROC4).